Reading from the N-terminus, the 500-residue chain is Low-density lipoprotein receptor-related protein 11 (500 aa).

A signal peptide spans 1–37 (MASVAQESAGSQRRLPPRHGALRGLLLLCLWLPSGRA). The Extracellular segment spans residues 38-450 (ALPPAAPLSE…GGEHPAPETG (413 aa)). Residues 99-184 (AMPDAIIRTK…FALHSGYSSY (86 aa)) form the MANSC domain. Asn-164 and Asn-291 each carry an N-linked (GlcNAc...) asparagine glycan. Positions 210–305 (PLSKAGQDVV…VLRAAYSTGG (96 aa)) constitute a PKD domain. The region spanning 309–345 (TCSRYHFFCDDGCCIDITLACDGVQQCPDGSDEDFCQ) is the LDL-receptor class A domain. 3 disulfides stabilise this stretch: Cys-310–Cys-322, Cys-317–Cys-335, and Cys-329–Cys-344. The segment at 358 to 445 (AASPALPRTT…KGDGGGGEHP (88 aa)) is disordered. Asn-401 carries N-linked (GlcNAc...) asparagine glycosylation. Residues 451-473 (AVLPLALGLAITALLLLMVACRL) traverse the membrane as a helical segment. Residues 474-500 (RLVKQKLKKARPITSEESDYLINGMYL) lie on the Cytoplasmic side of the membrane. Ser-491 is modified (phosphoserine).

It belongs to the LDLR family.

Its subcellular location is the membrane. In Homo sapiens (Human), this protein is Low-density lipoprotein receptor-related protein 11 (LRP11).